Consider the following 1001-residue polypeptide: Protein MEI2-like 4 (1001 aa).

The segment at 100 to 120 (HANLPPSPWRPDQETGRQTDS) is disordered. 2 consecutive RRM domains span residues 275-348 (RTLF…YSIP) and 360-433 (GTIV…TSRL). Disordered stretches follow at residues 767–815 (GGPS…KKQY) and 941–1001 (FHSD…PAKD). Over residues 793–803 (PGERMRSRRND) the composition is skewed to basic and acidic residues. Over residues 978–994 (DISITSVNCDTSTNGVD) the composition is skewed to polar residues.

Its function is as follows. Probable RNA-binding protein that may play a role in growth regulation. The protein is Protein MEI2-like 4 (ML4) of Oryza sativa subsp. japonica (Rice).